Here is a 181-residue protein sequence, read N- to C-terminus: 30 kDa heat shock protein (181 aa).

The sHSP domain maps to 33-181 (ASVQSFAPRF…PPTAKKITIQ (149 aa)). Basic and acidic residues predominate over residues 79 to 115 (GRSEREYHSSSDDNKNDQADTENQARGESSEVAKTGE). The interval 79 to 127 (GRSEREYHSSSDDNKNDQADTENQARGESSEVAKTGEKQVSTKKAANKS) is disordered.

This sequence belongs to the small heat shock protein (HSP20) family.

In Emericella nidulans (strain FGSC A4 / ATCC 38163 / CBS 112.46 / NRRL 194 / M139) (Aspergillus nidulans), this protein is 30 kDa heat shock protein (hsp30).